The sequence spans 1796 residues: U3 small nucleolar RNA-associated protein 10 (1796 aa).

12 HEAT repeats span residues Leu-586 to Glu-623, Leu-656 to Gly-692, Asp-861 to Ser-898, Asp-983 to Asp-1021, Gln-1052 to His-1089, Gln-1161 to Ser-1198, Leu-1258 to Asn-1295, Thr-1302 to Lys-1340, Glu-1344 to Asp-1383, Ser-1492 to Asp-1529, Asp-1711 to Glu-1748, and Glu-1752 to Glu-1789. The segment at Thr-881–Val-901 is disordered.

This sequence belongs to the HEATR1/UTP10 family. As to quaternary structure, component of the ribosomal small subunit (SSU) processome.

It is found in the nucleus. It localises to the nucleolus. Involved in nucleolar processing of pre-18S ribosomal RNA. Involved in ribosome biosynthesis. In Pyricularia oryzae (strain 70-15 / ATCC MYA-4617 / FGSC 8958) (Rice blast fungus), this protein is U3 small nucleolar RNA-associated protein 10.